The primary structure comprises 209 residues: Uracil phosphoribosyltransferase (209 aa).

Residues Arg-79, Arg-104, and 131–139 contribute to the 5-phospho-alpha-D-ribose 1-diphosphate site; that span reads DPMLATGGS. Uracil-binding positions include Ile-194 and 199–201; that span reads GDA. A 5-phospho-alpha-D-ribose 1-diphosphate-binding site is contributed by Asp-200.

It belongs to the UPRTase family. It depends on Mg(2+) as a cofactor.

It carries out the reaction UMP + diphosphate = 5-phospho-alpha-D-ribose 1-diphosphate + uracil. Its pathway is pyrimidine metabolism; UMP biosynthesis via salvage pathway; UMP from uracil: step 1/1. Allosterically activated by GTP. Catalyzes the conversion of uracil and 5-phospho-alpha-D-ribose 1-diphosphate (PRPP) to UMP and diphosphate. The polypeptide is Uracil phosphoribosyltransferase (Streptococcus suis (strain 05ZYH33)).